The sequence spans 181 residues: Probable RNA 2'-phosphotransferase (181 aa).

Belongs to the KptA/TPT1 family.

In terms of biological role, removes the 2'-phosphate from RNA via an intermediate in which the phosphate is ADP-ribosylated by NAD followed by a presumed transesterification to release the RNA and generate ADP-ribose 1''-2''-cyclic phosphate (APPR&gt;P). May function as an ADP-ribosylase. This is Probable RNA 2'-phosphotransferase from Acaryochloris marina (strain MBIC 11017).